The primary structure comprises 155 residues: 3-dehydroquinate dehydratase (155 aa).

The active-site Proton acceptor is the tyrosine 32. Residues asparagine 84, histidine 90, and aspartate 97 each coordinate substrate. The active-site Proton donor is histidine 110. Substrate contacts are provided by residues 111 to 112 (LS) and arginine 121.

Belongs to the type-II 3-dehydroquinase family. As to quaternary structure, homododecamer.

The catalysed reaction is 3-dehydroquinate = 3-dehydroshikimate + H2O. It functions in the pathway metabolic intermediate biosynthesis; chorismate biosynthesis; chorismate from D-erythrose 4-phosphate and phosphoenolpyruvate: step 3/7. Catalyzes a trans-dehydration via an enolate intermediate. The protein is 3-dehydroquinate dehydratase of Ralstonia pickettii (strain 12J).